Consider the following 318-residue polypeptide: tRNA-cytidine(32) 2-sulfurtransferase (318 aa).

The PP-loop motif motif lies at serine 52 to serine 57. The [4Fe-4S] cluster site is built by cysteine 127, cysteine 130, and cysteine 218.

This sequence belongs to the TtcA family. As to quaternary structure, homodimer. Mg(2+) serves as cofactor. It depends on [4Fe-4S] cluster as a cofactor.

The protein resides in the cytoplasm. The enzyme catalyses cytidine(32) in tRNA + S-sulfanyl-L-cysteinyl-[cysteine desulfurase] + AH2 + ATP = 2-thiocytidine(32) in tRNA + L-cysteinyl-[cysteine desulfurase] + A + AMP + diphosphate + H(+). Its pathway is tRNA modification. Functionally, catalyzes the ATP-dependent 2-thiolation of cytidine in position 32 of tRNA, to form 2-thiocytidine (s(2)C32). The sulfur atoms are provided by the cysteine/cysteine desulfurase (IscS) system. This is tRNA-cytidine(32) 2-sulfurtransferase from Actinobacillus pleuropneumoniae serotype 3 (strain JL03).